Reading from the N-terminus, the 87-residue chain is A-agglutinin-binding subunit (87 aa).

The first 18 residues, 1-18, serve as a signal peptide directing secretion; sequence MQLLRCFSIFSVIASVLA. O-linked (Man...) threonine glycosylation is present at threonine 22. Serine 30 carries O-linked (Man...) serine glycosylation. An O-linked (Man...) threonine glycan is attached at threonine 32. Serine 39 carries O-linked (Man...) serine glycosylation. O-linked (Man...) threonine glycosylation is present at threonine 63. Serine 66 is a glycosylation site (O-linked (Man...) serine). Threonine 75 carries an O-linked (Man...) threonine glycan.

In terms of assembly, heterodimer; disulfide-linked. Interacts with SAG1.

Functionally, receptor binding subunit of the a-agglutinin heterodimer. S.cerevisiae a and alpha cells express the complementary cell surface glycoproteins a-agglutinin and alpha-agglutinin, respectively, which interact with one another to promote cellular aggregation during mating. This chain is A-agglutinin-binding subunit (AGA2), found in Saccharomyces cerevisiae (strain ATCC 204508 / S288c) (Baker's yeast).